The sequence spans 194 residues: 5'-deoxynucleotidase VV1113 (194 aa).

Residues 18-19 (RW) and His33 contribute to the substrate site. Residues 30 to 142 (VSEHSLQVAF…VKQADSICAY (113 aa)) enclose the HD domain. A divalent metal cation is bound by residues His33, His68, and Asp69. Residues Asp69, 77 to 80 (DLPT), and Asp137 contribute to the substrate site. Asp137 is a binding site for a divalent metal cation.

The protein belongs to the 5DNU family. Homodimer. Requires a divalent metal cation as cofactor.

Its subcellular location is the cytoplasm. It catalyses the reaction a 2'-deoxyribonucleoside 5'-phosphate + H2O = a 2'-deoxyribonucleoside + phosphate. In terms of biological role, catalyzes the strictly specific dephosphorylation of 2'-deoxyribonucleoside 5'-monophosphates. This is 5'-deoxynucleotidase VV1113 from Vibrio vulnificus (strain YJ016).